A 66-amino-acid polypeptide reads, in one-letter code: Large ribosomal subunit protein bL33c (66 aa).

This sequence belongs to the bacterial ribosomal protein bL33 family.

The protein localises to the plastid. The protein resides in the chloroplast. This Helianthus annuus (Common sunflower) protein is Large ribosomal subunit protein bL33c.